Here is a 148-residue protein sequence, read N- to C-terminus: Globin, monomeric component M-IV (148 aa).

In terms of domain architecture, Globin spans 2 to 147 (GLSAAQRQVV…ISGALISGLQ (146 aa)). His-91 contacts heme b.

Monomer.

In Glycera dibranchiata (Bloodworm), this protein is Globin, monomeric component M-IV.